A 1045-amino-acid polypeptide reads, in one-letter code: Protein madd-4 (1045 aa).

The N-terminal stretch at 1 to 23 is a signal peptide; it reads MKCSYTVVFLLFYLLIASFHVDA. TSP type-1 domains lie at 24 to 71, 236 to 292, 294 to 510, 512 to 572, and 576 to 635; these read LSWA…KTCE, RCRW…NCVS, SCGR…HPCP, FWLT…NVVA, and TWVT…GSCS. 3 cysteine pairs are disulfide-bonded: Cys-35–Cys-65, Cys-39–Cys-70, and Cys-50–Cys-55. Asn-268 and Asn-280 each carry an N-linked (GlcNAc...) asparagine glycan. Residues 637–732 form the Ig-like C2-type domain; it reads PELLSNRVFE…FTDRLQGNVT (96 aa). Cys-674 and Cys-722 are oxidised to a cystine. 2 N-linked (GlcNAc...) asparagine glycosylation sites follow: Asn-730 and Asn-781. Residues 811–873 enclose the TSP type-1 6 domain; sequence RWDIGHWSEC…TRPCHREDCP (63 aa). N-linked (GlcNAc...) asparagine glycosylation is found at Asn-899 and Asn-906. One can recognise a TSP type-1 7 domain in the interval 932 to 990; sequence CKAEWRTSDWGSCSSECGTGGVQLRLLSCVWISSGRPAGRNCEQMRRPHSARACVADEP. Positions 1004 to 1041 constitute a PLAC domain; that stretch reads RDASCQDQSRFCDIIKLFHSCDSLEVRQKCCSTCTFVE.

As to quaternary structure, interacts with eva-1 (via the SUEL-type lectin domain). Interacts with unc-5. Interacts with unc-40; the interaction is required for the localization of unc-40 to postsynaptic domains. Isoform a forms homodimers and heterodimers with isoform b. Isoform b forms homodimers and heterodimers with isoform a. Isoform b interacts with nlg-1 (via extracellular domain); the interaction is required for nlg-1 localization to postsynaptic domains. Isoform b interacts (via the Ig-like C2-type domain) with nrx-1 (via C-terminus). As to expression, isoform a: Expressed in the commissural GABAergic and cholinergic motor neurons in the first larval stage but only in the cholinergic motor neurons in later larval stages and in adult animals. At the L1 larval stage, mainly localized at the nerve ring and at the dorsal cord. Isoform b: Expressed in the commissural GABAergic and cholinergic motor neurons whose cell bodies reside in the ventral nerve cord and which extend axons into the ventral and dorsal nerve cord. Also expressed in the head neurons RIA, RIC, lateral IL1s, lateral IL2s, OLLs, RMEs and SABs, all of which extend axons into the nerve ring. Expressed in the embryogenic blast cells and the corresponding terminally differentiated ventral cord motor neurons and head neurons.

Its subcellular location is the cell projection. The protein localises to the axon. It is found in the secreted. The protein resides in the synapse. It localises to the extracellular space. Its subcellular location is the extracellular matrix. In terms of biological role, component of an extracellular matrix cue that is involved in the guidance of dorsoventral midline migrations and in the specification of postsynaptic domains at neuromuscular junctions (NMJs). Acts as a ligand for the netrin receptor unc-40 and the neuroligin receptor nlg-1. Secreted by the dorsal and ventral nerve cords to attract sensory axons and muscle membrane extensions called muscle arms. In parallel with unc-6 and slt-1, involved in the netrin receptor unc-40 dependent guidance of the AVM and PVM mechanosensory axons along the dorsal-ventral axis. The unc-40 coreceptor eva-1 is enhancing the responsiveness of unc-40 to the madd-4 guidance cue to attract the muscle arm extensions and AVM mechanosensory axons towards the dorsoventral midline. Acts as a synaptic organizer and is required for the specification of inhibitory GABAergic and excitatory cholinergic identities of postsynaptic domains at neuromuscular junctions (NMJs). Required for the recruitment of unc-40 to both cholinergic and GABAergic NMJs. Promotes the clustering of ACh receptors and GABA(A) receptors at postsynaptic sites during synaptogenesis. The binding to the presynaptic adhesion protein nrx-1 and to the neuroligin nlg-1 at postsynaptic sites promotes clustering of GABAergic receptors at postsynaptic NMJs, thereby contributing to normal GABAergic synaptic transmission. Functionally, isoform a and isoform c: Promotes the clustering of acetylcholine receptors (AChR) at excitatory cholinergic synapses of NMJs via the netrin receptor unc-40. Acts as a guidance cue in the attraction of muscle membrane extensions (muscle arms) to the dorsal cord and in cooperation with unc-6 to the ventral cord via the netrin receptor unc-40 and via the unc-40 coreceptor eva-1. Together with nrx-1, clusters netrin receptor unc-40 and neuroligin nlg-1 at postsynaptic sites of GABAergic NMJs, thereby promoting the recruitment of GABA(A) receptors at GABAergic synapses. Prevents the recruitment of GABAergic receptors to cholinergic synapses. The chain is Protein madd-4 from Caenorhabditis elegans.